Consider the following 361-residue polypeptide: Fructose-bisphosphate aldolase (361 aa).

Thr2 is modified (N-acetylthreonine). Substrate-binding residues include Arg56 and Lys147. Catalysis depends on Glu188, which acts as the Proton acceptor. Residue Lys230 is the Schiff-base intermediate with dihydroxyacetone-P of the active site.

This sequence belongs to the class I fructose-bisphosphate aldolase family. Homotetramer. As to expression, mainly expressed in the heads and partly in the thoraxes of adult flies. Expressed in all adult tissues. The Alpha-beta mRNA shows strong expression in the abdomens of adults. In terms of tissue distribution, mainly expressed in adult abdominal regions and is also expressed in lesser amounts in other parts of the body. The Beta-gamma mRNA is expressed in adult heads.

It catalyses the reaction beta-D-fructose 1,6-bisphosphate = D-glyceraldehyde 3-phosphate + dihydroxyacetone phosphate. It participates in carbohydrate degradation; glycolysis; D-glyceraldehyde 3-phosphate and glycerone phosphate from D-glucose: step 4/4. Functionally, enzyme of the glycolytic pathway. Glycolysis is essential in glial cells but not in neurons; neurons rely on the citric acid cycle for their energy needs, and on lactate and alanine secreted into the hemolymph by glial cells to fuel it. May take part in developmental stage-specific or tissue -specific sugar-phosphate metabolisms. Protein acts on two substrates fructose 1,6-bisphosphate and fructose 1-phosphate (like other class I aldolases). The sequence is that of Fructose-bisphosphate aldolase from Drosophila melanogaster (Fruit fly).